The following is a 285-amino-acid chain: 2,3,4,5-tetrahydropyridine-2,6-dicarboxylate N-succinyltransferase (285 aa).

Positions 111 and 148 each coordinate substrate.

This sequence belongs to the transferase hexapeptide repeat family. As to quaternary structure, homotrimer.

It is found in the cytoplasm. The enzyme catalyses (S)-2,3,4,5-tetrahydrodipicolinate + succinyl-CoA + H2O = (S)-2-succinylamino-6-oxoheptanedioate + CoA. It participates in amino-acid biosynthesis; L-lysine biosynthesis via DAP pathway; LL-2,6-diaminopimelate from (S)-tetrahydrodipicolinate (succinylase route): step 1/3. The chain is 2,3,4,5-tetrahydropyridine-2,6-dicarboxylate N-succinyltransferase from Sinorhizobium medicae (strain WSM419) (Ensifer medicae).